A 358-amino-acid polypeptide reads, in one-letter code: Carbamoyl phosphate synthase small chain (358 aa).

The interval 1 to 172 (MKAALALEDG…EAKRFESDGD (172 aa)) is CPSase. The L-glutamine site is built by S45, G222, and G224. One can recognise a Glutamine amidotransferase type-1 domain in the interval 174 to 358 (EVVLVDCGVK…RYVDMLREYR (185 aa)). The Nucleophile role is filled by C249. L-glutamine contacts are provided by L250, Q253, N291, and F294. Active-site residues include H333 and E335.

It belongs to the CarA family. Composed of two chains; the small (or glutamine) chain promotes the hydrolysis of glutamine to ammonia, which is used by the large (or ammonia) chain to synthesize carbamoyl phosphate. Tetramer of heterodimers (alpha,beta)4.

The catalysed reaction is hydrogencarbonate + L-glutamine + 2 ATP + H2O = carbamoyl phosphate + L-glutamate + 2 ADP + phosphate + 2 H(+). The enzyme catalyses L-glutamine + H2O = L-glutamate + NH4(+). It participates in amino-acid biosynthesis; L-arginine biosynthesis; carbamoyl phosphate from bicarbonate: step 1/1. Its pathway is pyrimidine metabolism; UMP biosynthesis via de novo pathway; (S)-dihydroorotate from bicarbonate: step 1/3. Functionally, small subunit of the glutamine-dependent carbamoyl phosphate synthetase (CPSase). CPSase catalyzes the formation of carbamoyl phosphate from the ammonia moiety of glutamine, carbonate, and phosphate donated by ATP, constituting the first step of 2 biosynthetic pathways, one leading to arginine and/or urea and the other to pyrimidine nucleotides. The small subunit (glutamine amidotransferase) binds and cleaves glutamine to supply the large subunit with the substrate ammonia. The protein is Carbamoyl phosphate synthase small chain of Archaeoglobus fulgidus (strain ATCC 49558 / DSM 4304 / JCM 9628 / NBRC 100126 / VC-16).